Consider the following 765-residue polypeptide: Phosphoribosylformylglycinamidine synthase subunit PurL (765 aa).

The segment covering 1–13 has biased composition (polar residues); it reads MTVSPTSAPTQAI. Residues 1 to 32 are disordered; sequence MTVSPTSAPTQAIDTVERAATTPDEPQPFGEL. His-65 is a catalytic residue. ATP contacts are provided by Tyr-68 and Lys-112. Position 114 (Glu-114) interacts with Mg(2+). Substrate contacts are provided by residues 115–118 and Arg-137; that span reads SHNH. His-116 serves as the catalytic Proton acceptor. Mg(2+) is bound at residue Asp-138. Gln-263 serves as a coordination point for substrate. Asp-291 contributes to the Mg(2+) binding site. Residue 335-337 participates in substrate binding; it reads ESQ. ATP-binding residues include Asn-523 and Gly-560. Asn-561 is a binding site for Mg(2+). Ser-563 is a binding site for substrate.

This sequence belongs to the FGAMS family. Monomer. Part of the FGAM synthase complex composed of 1 PurL, 1 PurQ and 2 PurS subunits.

Its subcellular location is the cytoplasm. The enzyme catalyses N(2)-formyl-N(1)-(5-phospho-beta-D-ribosyl)glycinamide + L-glutamine + ATP + H2O = 2-formamido-N(1)-(5-O-phospho-beta-D-ribosyl)acetamidine + L-glutamate + ADP + phosphate + H(+). Its pathway is purine metabolism; IMP biosynthesis via de novo pathway; 5-amino-1-(5-phospho-D-ribosyl)imidazole from N(2)-formyl-N(1)-(5-phospho-D-ribosyl)glycinamide: step 1/2. Its function is as follows. Part of the phosphoribosylformylglycinamidine synthase complex involved in the purines biosynthetic pathway. Catalyzes the ATP-dependent conversion of formylglycinamide ribonucleotide (FGAR) and glutamine to yield formylglycinamidine ribonucleotide (FGAM) and glutamate. The FGAM synthase complex is composed of three subunits. PurQ produces an ammonia molecule by converting glutamine to glutamate. PurL transfers the ammonia molecule to FGAR to form FGAM in an ATP-dependent manner. PurS interacts with PurQ and PurL and is thought to assist in the transfer of the ammonia molecule from PurQ to PurL. The sequence is that of Phosphoribosylformylglycinamidine synthase subunit PurL from Mycolicibacterium paratuberculosis (strain ATCC BAA-968 / K-10) (Mycobacterium paratuberculosis).